Here is a 274-residue protein sequence, read N- to C-terminus: Large ribosomal subunit protein uL2 (274 aa).

Disordered stretches follow at residues 21 to 59 (KVGLSKDEPEKSLTSGKKSSGGRNNHGRITTRHRGGGHK) and 224 to 274 (AMNP…QLKG). Over residues 32-42 (SLTSGKKSSGG) the composition is skewed to low complexity. The span at 45-59 (NHGRITTRHRGGGHK) shows a compositional bias: basic residues. The segment covering 263 to 274 (KSSDKYIKQLKG) has biased composition (basic and acidic residues).

It belongs to the universal ribosomal protein uL2 family. Part of the 50S ribosomal subunit. Forms a bridge to the 30S subunit in the 70S ribosome.

Functionally, one of the primary rRNA binding proteins. Required for association of the 30S and 50S subunits to form the 70S ribosome, for tRNA binding and peptide bond formation. It has been suggested to have peptidyltransferase activity; this is somewhat controversial. Makes several contacts with the 16S rRNA in the 70S ribosome. The polypeptide is Large ribosomal subunit protein uL2 (Wolbachia pipientis wMel).